A 527-amino-acid chain; its full sequence is Methane monooxygenase component A alpha chain (527 aa).

3 residues coordinate Fe cation: glutamate 114, glutamate 144, and histidine 147. Cysteine 151 is an active-site residue. Residues glutamate 209, glutamate 243, and histidine 246 each contribute to the Fe cation site.

It belongs to the TmoA/XamoA family. In terms of assembly, m.capsulatus has two forms of methane monooxygenase, a soluble and a membrane-bound type. The soluble type consists of four components (A to D): protein A, comprising three chains, in an alpha-2, beta-2, gamma-2 configuration, is a nonheme iron protein containing an unusual mu-hydroxo bridge structure at its active site and interacts with both oxygen and methane. The cofactor is Fe cation.

The enzyme catalyses methane + NADH + O2 + H(+) = methanol + NAD(+) + H2O. It carries out the reaction methane + NADPH + O2 + H(+) = methanol + NADP(+) + H2O. Responsible for the initial oxygenation of methane to methanol in methanotrophs. It also catalyzes the monohydroxylation of a variety of unactivated alkenes, alicyclic, aromatic and heterocyclic compounds. In Methylococcus capsulatus (strain ATCC 33009 / NCIMB 11132 / Bath), this protein is Methane monooxygenase component A alpha chain (mmoX).